The sequence spans 177 residues: Translation initiation factor IF-3 (177 aa).

This sequence belongs to the IF-3 family. In terms of assembly, monomer.

It localises to the cytoplasm. IF-3 binds to the 30S ribosomal subunit and shifts the equilibrium between 70S ribosomes and their 50S and 30S subunits in favor of the free subunits, thus enhancing the availability of 30S subunits on which protein synthesis initiation begins. The polypeptide is Translation initiation factor IF-3 (Nitratiruptor sp. (strain SB155-2)).